A 344-amino-acid chain; its full sequence is N-acetyl-gamma-glutamyl-phosphate reductase (344 aa).

Residue C150 is part of the active site.

It belongs to the NAGSA dehydrogenase family. Type 1 subfamily.

The protein resides in the cytoplasm. It catalyses the reaction N-acetyl-L-glutamate 5-semialdehyde + phosphate + NADP(+) = N-acetyl-L-glutamyl 5-phosphate + NADPH + H(+). Its pathway is amino-acid biosynthesis; L-arginine biosynthesis; N(2)-acetyl-L-ornithine from L-glutamate: step 3/4. Catalyzes the NADPH-dependent reduction of N-acetyl-5-glutamyl phosphate to yield N-acetyl-L-glutamate 5-semialdehyde. This chain is N-acetyl-gamma-glutamyl-phosphate reductase, found in Pseudomonas putida (strain W619).